A 146-amino-acid chain; its full sequence is Hemoglobin subunit beta (146 aa).

The region spanning 2–146 (HWSAEEKQLI…VAHALARKYH (145 aa)) is the Globin domain. Positions 63 and 92 each coordinate heme b.

This sequence belongs to the globin family. Heterotetramer of two alpha chains and two beta chains. As to expression, red blood cells.

In terms of biological role, involved in oxygen transport from the lung to the various peripheral tissues. The sequence is that of Hemoglobin subunit beta (HBB) from Aptenodytes forsteri (Emperor penguin).